The sequence spans 299 residues: Ent-kaurene oxidase-like protein 1 (299 aa).

The helical transmembrane segment at 16–36 (AVVGVFVAAAVVGGFVAAVAL) threads the bilayer.

It belongs to the cytochrome P450 family. As to expression, expressed in roots and panicles.

It localises to the membrane. The chain is Ent-kaurene oxidase-like protein 1 from Oryza sativa subsp. japonica (Rice).